A 112-amino-acid chain; its full sequence is Cytochrome c (112 aa).

3 residues coordinate heme c: C23, C26, and H27. K81 carries the post-translational modification N6,N6,N6-trimethyllysine. Heme c is bound at residue M89. At K95 the chain carries N6,N6,N6-trimethyllysine.

It belongs to the cytochrome c family. Binds 1 heme c group covalently per subunit.

The protein localises to the mitochondrion intermembrane space. Its function is as follows. Electron carrier protein. The oxidized form of the cytochrome c heme group can accept an electron from the heme group of the cytochrome c1 subunit of cytochrome reductase. Cytochrome c then transfers this electron to the cytochrome oxidase complex, the final protein carrier in the mitochondrial electron-transport chain. This Arabidopsis thaliana (Mouse-ear cress) protein is Cytochrome c (CC-1).